Here is a 353-residue protein sequence, read N- to C-terminus: DNA-directed RNA polymerase subunit alpha (353 aa).

The alpha N-terminal domain (alpha-NTD) stretch occupies residues 1–245; it reads MEKIQKITYK…AHFQIIGNIN (245 aa). The interval 261-353 is alpha C-terminal domain (alpha-CTD); the sequence is EREIKSTTPI…QLNNSEEGEE (93 aa).

This sequence belongs to the RNA polymerase alpha chain family. In terms of assembly, homodimer. The RNAP catalytic core consists of 2 alpha, 1 beta, 1 beta' and 1 omega subunit. When a sigma factor is associated with the core the holoenzyme is formed, which can initiate transcription.

The catalysed reaction is RNA(n) + a ribonucleoside 5'-triphosphate = RNA(n+1) + diphosphate. Functionally, DNA-dependent RNA polymerase catalyzes the transcription of DNA into RNA using the four ribonucleoside triphosphates as substrates. The protein is DNA-directed RNA polymerase subunit alpha of Mycoplasma sp.